A 347-amino-acid chain; its full sequence is NADH-ubiquinone oxidoreductase chain 2 (347 aa).

The next 9 membrane-spanning stretches (helical) occupy residues 5–22, 26–45, 60–80, 150–170, 178–198, 200–220, 237–257, 274–294, and 327–347; these read ILAIVMSTVISGTIMVLI, WLTIWIGFEMNMLAIIPILM, FLTQATASMLLMLGIIINLLL, NPNLLMAMAIMSVLVGGWGGL, ILAYSSIAHMGWMIAVTTYNP, LMLLNLTIYITMTLGTFMLFM, LPLIASLILMTMLSLGGLPPL, DMAIMATFMAMTALLNLYFYM, and PPLIMISTMLLPLTPMVLTLF.

Belongs to the complex I subunit 2 family. In terms of assembly, core subunit of respiratory chain NADH dehydrogenase (Complex I) which is composed of 45 different subunits. Interacts with TMEM242.

It localises to the mitochondrion inner membrane. The catalysed reaction is a ubiquinone + NADH + 5 H(+)(in) = a ubiquinol + NAD(+) + 4 H(+)(out). Its function is as follows. Core subunit of the mitochondrial membrane respiratory chain NADH dehydrogenase (Complex I) which catalyzes electron transfer from NADH through the respiratory chain, using ubiquinone as an electron acceptor. Essential for the catalytic activity and assembly of complex I. This Martes zibellina (Sable) protein is NADH-ubiquinone oxidoreductase chain 2.